A 988-amino-acid chain; its full sequence is Chitin synthase 1 (988 aa).

The tract at residues 29–75 (QHHWPPSSGSSLGRAPSIPLSSSNPRSPIRPSTPSRVSTDWTRPPAP) is disordered. The span at 44-66 (PSIPLSSSNPRSPIRPSTPSRVS) shows a compositional bias: low complexity. 7 consecutive transmembrane segments (helical) span residues 577 to 596 (WLNG…KQIW), 616 to 636 (FISL…FYFV), 656 to 676 (IFVI…ILSL), 732 to 752 (IFTN…LMSF), 764 to 784 (SAQY…YAFC), 864 to 884 (YVVA…SEAY), and 911 to 931 (AIGS…EGRI). Positions 950–988 (AGLGSGFSESGKTGITSGSGMSGMSLSDVTSKISEKLAG) are disordered. Positions 957 to 976 (SESGKTGITSGSGMSGMSLS) are enriched in low complexity.

It belongs to the chitin synthase family. Class II subfamily.

Its subcellular location is the cell membrane. It catalyses the reaction [(1-&gt;4)-N-acetyl-beta-D-glucosaminyl](n) + UDP-N-acetyl-alpha-D-glucosamine = [(1-&gt;4)-N-acetyl-beta-D-glucosaminyl](n+1) + UDP + H(+). Its function is as follows. Polymerizes chitin, a structural polymer of the cell wall and septum, by transferring the sugar moiety of UDP-GlcNAc to the non-reducing end of the growing chitin polymer. CHS1 mainly responsible for normal yeast cell reproductive growth. This is Chitin synthase 1 from Exophiala dermatitidis (Black yeast-like fungus).